Here is a 142-residue protein sequence, read N- to C-terminus: Putative pre-16S rRNA nuclease (142 aa).

Belongs to the YqgF nuclease family.

Its subcellular location is the cytoplasm. In terms of biological role, could be a nuclease involved in processing of the 5'-end of pre-16S rRNA. This is Putative pre-16S rRNA nuclease from Prosthecochloris aestuarii (strain DSM 271 / SK 413).